We begin with the raw amino-acid sequence, 345 residues long: UDP-N-acetylenolpyruvoylglucosamine reductase (345 aa).

One can recognise an FAD-binding PCMH-type domain in the interval Leu-16–Ser-186. The active site involves Arg-162. Residue Ser-232 is the Proton donor of the active site. Glu-328 is an active-site residue.

This sequence belongs to the MurB family. FAD is required as a cofactor.

The protein localises to the cytoplasm. It carries out the reaction UDP-N-acetyl-alpha-D-muramate + NADP(+) = UDP-N-acetyl-3-O-(1-carboxyvinyl)-alpha-D-glucosamine + NADPH + H(+). Its pathway is cell wall biogenesis; peptidoglycan biosynthesis. Cell wall formation. In Yersinia pestis, this protein is UDP-N-acetylenolpyruvoylglucosamine reductase.